Reading from the N-terminus, the 421-residue chain is MQSNDENIYFPANQYVNAGQYSPLQQSFSQNSQYDLFDGFAEFGFLEQVPTTNMHSFSQSTQMEQNCLPNVNNSTRKRKAPGQNEQATVKRRQIGIEKWRLPSRSVVQPSADISDLRRPPISYVALCALACRNAPDMKITPAGVYAFILHHWRYYRYANENWKNSVRHQLSSKEHFDEETFQPDPSNQTVRRKFYIVKNPNMIRQNLISDADFDFFRKDSRGIEFYQKMFAGQIGLPRSLFYQIIGNEIPFLAGPENSSMFYQLLGMGKVVGYLETRYFREHYRSEHAATEPKYEEDYANFTEKIPSNAENLMSYGAATERNFQKFDFTDEEIELFHLNISSYHSVQKTCKECNLPNWCTPSVGDVETYVFGRQVPMPVNTPVILQQFETVAEQEGIRNNPLEEQKTTKDPRDISVLEALA.

Positions 118 to 218 (RPPISYVALC…SDADFDFFRK (101 aa)) form a DNA-binding region, fork-head.

The protein localises to the nucleus. Functionally, transcription factor. Binds to DNA sequence motif 5'-CTGTTTCA-3'. Regulates expression of a class of small RNAs, known as 21U-RNAs, perhaps acting redundantly with fkh-4 and fkh-5. This is Forkhead box protein fkh-3 from Caenorhabditis elegans.